The following is a 1711-amino-acid chain: Serine/threonine-protein kinase MRCK beta (1711 aa).

The region spanning 76 to 342 (FEIIKVIGRG…IEDFKKHAFF (267 aa)) is the Protein kinase domain. Residues 82-90 (IGRGAFGEV) and K105 contribute to the ATP site. D200 serves as the catalytic Proton acceptor. Phosphoserine; by autocatalysis is present on residues S221 and S233. At T239 the chain carries Phosphothreonine; by autocatalysis. One can recognise an AGC-kinase C-terminal domain in the interval 343–413 (EGLNWENIRN…TTESCFSDRG (71 aa)). T423 carries the phosphothreonine modification. Coiled coils occupy residues 431 to 815 (QRDL…AHWE) and 878 to 939 (ELQS…FRAD). Positions 461–484 (LQESTQTVQSLHGSSRALSNSNRD) are disordered. Residues 463–481 (ESTQTVQSLHGSSRALSNS) show a composition bias toward polar residues. At R671 the chain carries Omega-N-methylarginine. Y954 is modified (phosphotyrosine). Residues 969–1009 (SSASEQETQAPKPEASPSMSVAASEQQEDMARPPQRPSAVP) form a disordered region. Residues 1025 to 1075 (AHQFSIKSFSSPTQCSHCTSLMVGLIRQGYACEVCSFACHVSCKDGAPQVC) form a Phorbol-ester/DAG-type zinc finger. The 120-residue stretch at 1095 to 1214 (GTAYKGHVKV…WVGILEGLQS (120 aa)) folds into the PH domain. The 274-residue stretch at 1240-1513 (IKAILTAAIV…RPLNSEGTLN (274 aa)) folds into the CNH domain. A CRIB domain is found at 1583 to 1596 (ISNPTNFNHVAHMG). The tract at residues 1611 to 1711 (AVPPSQEERP…EGLEQPACDT (101 aa)) is disordered. Over residues 1641–1650 (WPSSGGSEPS) the composition is skewed to polar residues. The span at 1664–1675 (DFDKEPDSDSTK) shows a compositional bias: basic and acidic residues. S1680, S1682, S1686, S1690, and S1693 each carry phosphoserine.

Belongs to the protein kinase superfamily. AGC Ser/Thr protein kinase family. DMPK subfamily. Homodimer and homotetramer via the coiled coil regions. Interacts tightly with GTP-bound but not GDP-bound CDC42. Interacts with TJP1, when in the presence of catalytically active CDC42. Forms a tripartite complex with MYO18A and LURAP1 with the latter acting as an adapter connecting CDC42BPB and MYO18A. LURAP1 binding results in activation of CDC42BPB by abolition of its negative autoregulation. Interacts with STRIP1, STRN3 and SIKE1. Interacts with CPNE4 (via VWFA domain). Interacts with LURAP1. Interacts (via AGC-kinase C-terminal domain) with FAM89B/LRAP25 (via LRR repeat). Forms a tripartite complex with FAM89B/LRAP25 and LIMK1. It depends on Mg(2+) as a cofactor. In terms of processing, proteolytically cleaved by caspases upon apoptosis induction. Expressed in all tissues examined, with high levels in heart, brain, placenta and lung.

It is found in the cytoplasm. It localises to the cell membrane. The protein localises to the cell junction. The protein resides in the cell projection. Its subcellular location is the lamellipodium. The enzyme catalyses L-seryl-[protein] + ATP = O-phospho-L-seryl-[protein] + ADP + H(+). The catalysed reaction is L-threonyl-[protein] + ATP = O-phospho-L-threonyl-[protein] + ADP + H(+). Maintained in an inactive, closed conformation by an interaction between the kinase domain and the negative autoregulatory C-terminal coiled-coil region. Agonist binding to the phorbol ester binding site disrupts this, releasing the kinase domain to allow N-terminus-mediated dimerization and kinase activation by transautophosphorylation. Inhibited by chelerythrine chloride. Functionally, serine/threonine-protein kinase which is an important downstream effector of CDC42 and plays a role in the regulation of cytoskeleton reorganization and cell migration. Regulates actin cytoskeletal reorganization via phosphorylation of PPP1R12C and MYL9/MLC2. In concert with MYO18A and LURAP1, is involved in modulating lamellar actomyosin retrograde flow that is crucial to cell protrusion and migration. Phosphorylates PPP1R12A. In concert with FAM89B/LRAP25 mediates the targeting of LIMK1 to the lamellipodium resulting in its activation and subsequent phosphorylation of CFL1 which is important for lamellipodial F-actin regulation. The sequence is that of Serine/threonine-protein kinase MRCK beta from Homo sapiens (Human).